Here is a 233-residue protein sequence, read N- to C-terminus: B-cell lymphoma/leukemia 10 (233 aa).

At methionine 1 the chain carries N-acetylmethionine. The CARD domain maps to 13 to 101; sequence LTEVKKDALE…QNFLIQKITD (89 aa). Residues lysine 17, lysine 31, and lysine 63 each participate in a glycyl lysine isopeptide (Lys-Gly) (interchain with G-Cter in ubiquitin) cross-link. Serine 138 is subject to Phosphoserine. The disordered stretch occupies residues 187–233; it reads FSSTTLPRPGDPGAPPLPPDLQLEEEGTCANSSEMFLPLRSRTVSRQ. Residues 195–205 show a composition bias toward pro residues; the sequence is PGDPGAPPLPP.

In terms of assembly, homomultimer; homooligomerized following recruitment by CARD domain-containing proteins that form a nucleating helical template that recruits BCL10 via CARD-CARD interaction. Self-associates by CARD-CARD interaction and interacts with other CARD-proteins such as CARD9, CARD10, CARD11 and CARD14. Forms a complex with CARD14 and MALT1; resulting in the formation of a CBM (CARD14-BCL10-MALT1) complex. Forms a complex with CARD11 and MALT1; resulting in the formation of a CBM (CARD11-BCL10-MALT1) complex. Forms a complex with CARD9 and MALT1; resulting in the formation of a CBM (CARD9-BCL10-MALT1) complex. Found in a membrane raft complex, at least composed of BCL10, CARD11, DPP4 and IKBKB. Binds caspase-9 with its C-terminal domain. Interacts with TRAF2 and BIRC2/c-IAP2. Interacts with PELI2 and SOCS3; these interactions may be mutually exclusive. Phosphorylated. Phosphorylation results in dissociation from TRAF2 and binding to BIRC2/c-IAP2. Phosphorylated by IKBKB/IKKB. Post-translationally, ubiquitinated via both 'Lys-63'-linked and linear ('Met-1'-linked) polyubiquitin chains in response to T-cell receptor (TCR) activation. Ubiquitination is recognized by IKBKG/NEMO, the regulatory subunit of I-kappa-B kinase (IKK), and is required for TCR-induced NF-kappa-B activation. Linear ubiquitination at Lys-17, Lys-31 and Lys-63 is mediated by RNF31/HOIP; linear ubiquitination is recognized with much higher affinity than 'Lys-63'-linked ubiquitin by IKBKG/NEMO. CARD11 is required for linear ubiquitination by HOIP by promoting the targeting of BCL10 to RNF31/HOIP. In terms of processing, proteolytically cleaved by MALT1; required for T-cell activation. Ubiquitous.

It is found in the cytoplasm. The protein resides in the perinuclear region. The protein localises to the membrane raft. Its function is as follows. Plays a key role in both adaptive and innate immune signaling by bridging CARD domain-containing proteins to immune activation. Acts by channeling adaptive and innate immune signaling downstream of CARD domain-containing proteins CARD9, CARD11 and CARD14 to activate NF-kappa-B and MAP kinase p38 (MAPK11, MAPK12, MAPK13 and/or MAPK14) pathways which stimulate expression of genes encoding pro-inflammatory cytokines and chemokines. Recruited by activated CARD domain-containing proteins: homooligomerized CARD domain-containing proteins form a nucleating helical template that recruits BCL10 via CARD-CARD interaction, thereby promoting polymerization of BCL10, subsequent recruitment of MALT1 and formation of a CBM complex. This leads to activation of NF-kappa-B and MAP kinase p38 (MAPK11, MAPK12, MAPK13 and/or MAPK14) pathways which stimulate expression of genes encoding pro-inflammatory cytokines and chemokines. Activated by CARD9 downstream of C-type lectin receptors; CARD9-mediated signals are essential for antifungal immunity. Activated by CARD11 downstream of T-cell receptor (TCR) and B-cell receptor (BCR). Promotes apoptosis, pro-caspase-9 maturation and activation of NF-kappa-B via NIK and IKK. The polypeptide is B-cell lymphoma/leukemia 10 (Homo sapiens (Human)).